We begin with the raw amino-acid sequence, 364 residues long: Lytic cellulose monooxygenase (364 aa).

The N-terminal stretch at 1–34 (MARRSRYISLAAVMATLLSALGVTFLLGQGRAEA) is a signal peptide. Residues His35 and His144 each contribute to the Cu cation site. One can recognise a Chitin-binding type-4 domain in the interval 35 to 225 (HGVAMMPGSR…QENFFSCSDV (191 aa)). The interval 234–261 (VTGIRGSGGTPTPTPTPTTPPTTPPPTH) is disordered. Over residues 245–260 (TPTPTPTTPPTTPPPT) the composition is skewed to pro residues. Residues 258–364 (PPTHSGSCMA…PVGTIGCVAP (107 aa)) form the CBM2 domain.

Cu(2+) serves as cofactor.

The protein resides in the secreted. It catalyses the reaction [(1-&gt;4)-beta-D-glucosyl]n+m + reduced acceptor + O2 = [(1-&gt;4)-beta-D-glucosyl]m-1-(1-&gt;4)-D-glucono-1,5-lactone + [(1-&gt;4)-beta-D-glucosyl]n + acceptor + H2O.. It participates in glycan metabolism; cellulose degradation. Functionally, involved in the degradation of lignocellulosic biomass. Catalyzes the oxidative cleavage of glycosidic bonds in cellulosic substrates via a copper-dependent mechanism. Degrades phosphoric acid swollen cellulose (PASC) to oxidized cellooligosaccharides with degrees of polymerization of 4-8. Also shows activity on agricultural fiber paper pulps such as flax pulp. Is not active on chitin. This is Lytic cellulose monooxygenase from Streptomyces ambofaciens (strain ATCC 23877 / 3486 / DSM 40053 / JCM 4204 / NBRC 12836 / NRRL B-2516).